We begin with the raw amino-acid sequence, 573 residues long: Cytochrome P450 monooxygenase GME11363 (573 aa).

Residues 10-30 (IGVVAAVLLAALILLYRAALP) traverse the membrane as a helical segment. Cys519 is a binding site for heme.

This sequence belongs to the cytochrome P450 family. The cofactor is heme.

The protein localises to the membrane. Its pathway is secondary metabolite biosynthesis. In terms of biological role, cytochrome P450 monooxygenase; part of the gene cluster that mediates the biosynthesis of dibenzodioxocinones such as pestalotiollide B, a novel class of inhibitors against cholesterol ester transfer protein (CEPT). The biosynthesis initiates from condensation of acetate and malonate units catalyzed by the non-reducing PKS pks8/GME11356. Pks8/GME11356 lacks a thioesterase (TE) domain, which is important to the cyclizing of the third ring of atrochrysone carboxylic acid, and the esterase GME11355 might play the role of TE and catalyzes the cyclization reaction of the C ring. The lactamase-like protein GME11357 (or other beta-lactamases in Pestalotiopsis microspora) probably hydrolyzes the thioester bond between the ACP of pks8/GME11356 and the intermediate to release atrochrysone carboxylic acid, which is spontaneously dehydrates to form endocrocin anthrone. Endocrocin anthrone is further converted to emodin via the endocrocin intermediate. Emodin is then oxidized by several enzymes such as the Baeyer-Villiger oxidase GME11358, the oxidoreductase GME11367, the short chain dehydrogenase/reductase GME11373, as well as by other oxidoreductases from the cluster, to modify the A and C rings and open the B ring, and finally yield monodictyphenone. The prenyltransferase GME11375 may catalyze the addition reaction between the C5 side chains and the carbon bone of dibenzodioxocinones. The remaining biochemical reactions to the final product dibenzodioxocinones should be methylation catalyzed by methyltransferase GME11366 and reduction and lactonization reaction catalyzed by a series of oxidordeuctases. This is Cytochrome P450 monooxygenase GME11363 from Pestalotiopsis microspora.